The chain runs to 237 residues: Uridylate kinase (237 aa).

12–15 (KLSG) serves as a coordination point for ATP. The tract at residues 20-25 (GEDGLG) is involved in allosteric activation by GTP. UMP is bound at residue glycine 54. ATP is bound by residues glycine 55 and arginine 59. Residues aspartate 74 and 135-142 (TGNPFFTT) each bind UMP. ATP-binding residues include threonine 162, tyrosine 168, and aspartate 171.

Belongs to the UMP kinase family. As to quaternary structure, homohexamer.

Its subcellular location is the cytoplasm. It carries out the reaction UMP + ATP = UDP + ADP. The protein operates within pyrimidine metabolism; CTP biosynthesis via de novo pathway; UDP from UMP (UMPK route): step 1/1. Allosterically activated by GTP. Inhibited by UTP. In terms of biological role, catalyzes the reversible phosphorylation of UMP to UDP. The polypeptide is Uridylate kinase (Haemophilus influenzae (strain PittGG)).